We begin with the raw amino-acid sequence, 362 residues long: S-adenosylmethionine:tRNA ribosyltransferase-isomerase (362 aa).

Belongs to the QueA family. As to quaternary structure, monomer.

It localises to the cytoplasm. The enzyme catalyses 7-aminomethyl-7-carbaguanosine(34) in tRNA + S-adenosyl-L-methionine = epoxyqueuosine(34) in tRNA + adenine + L-methionine + 2 H(+). The protein operates within tRNA modification; tRNA-queuosine biosynthesis. In terms of biological role, transfers and isomerizes the ribose moiety from AdoMet to the 7-aminomethyl group of 7-deazaguanine (preQ1-tRNA) to give epoxyqueuosine (oQ-tRNA). The polypeptide is S-adenosylmethionine:tRNA ribosyltransferase-isomerase (Methylobacterium sp. (strain 4-46)).